A 549-amino-acid chain; its full sequence is Cilia- and flagella-associated protein 45 (549 aa).

A disordered region spans residues 1 to 27; that stretch reads MPLSTAGVLSSASTASNRSRNRPRYRT. Coiled-coil stretches lie at residues 119–232 and 259–393; these read KEEL…MMEV and IVEQ…KRNQ. Residues 391 to 416 form a disordered region; it reads RNQEVADREWRRKEKENAQKKMETEA.

Belongs to the CFAP45 family. In terms of assembly, microtubule inner protein component of sperm flagellar doublet microtubules. Interacts with AK8; dimerization with AK8 may create a cavity at the interface of the dimer that can accommodate AMP. Interacts with CFAP52. Interacts with ENKUR. Directly interacts with DNALI1. Interacts with DNAH11. Interacts with DNAI1. Expressed in trachea multiciliated cells.

Its subcellular location is the cytoplasm. The protein resides in the cytoskeleton. It localises to the cilium axoneme. It is found in the flagellum axoneme. The protein localises to the cell projection. Its subcellular location is the cilium. The protein resides in the flagellum. Its function is as follows. Microtubule inner protein (MIP) part of the dynein-decorated doublet microtubules (DMTs) in cilia axoneme, which is required for motile cilia beating. It is an AMP-binding protein that may facilitate dynein ATPase-dependent ciliary and flagellar beating via adenine nucleotide homeostasis. May function as a donor of AMP to AK8 and hence promote ADP production. The protein is Cilia- and flagella-associated protein 45 of Bos taurus (Bovine).